The sequence spans 127 residues: Histone H2B type 1-A (127 aa).

The segment at 1–36 is disordered; it reads MPEVSSKGATISKKGFKKAVVKTQKKEGKKRKRTRK. Residue Pro-2 is modified to N-acetylproline. An N6-acetyllysine; alternate mark is found at Lys-7, Lys-13, Lys-14, Lys-17, Lys-18, Lys-22, and Lys-25. Residues Lys-7, Lys-13, Lys-14, Lys-17, Lys-18, Lys-22, Lys-25, and Lys-36 each carry the N6-crotonyllysine; alternate modification. Lys-7 and Lys-13 each carry N6-lactoyllysine; alternate. A Glycyl lysine isopeptide (Lys-Gly) (interchain with G-Cter in SUMO2); alternate cross-link involves residue Lys-7. An N6-lactoyllysine; alternate mark is found at Lys-17, Lys-18, Lys-22, and Lys-25. A Glycyl lysine isopeptide (Lys-Gly) (interchain with G-Cter in SUMO2); alternate cross-link involves residue Lys-22. An N6-succinyllysine; alternate modification is found at Lys-36. Residue Lys-36 forms a Glycyl lysine isopeptide (Lys-Gly) (interchain with G-Cter in ubiquitin); alternate linkage. Ser-38 carries the post-translational modification Phosphoserine. Position 45 is an N6-lactoyllysine; alternate (Lys-45). N6-methyllysine is present on Lys-48. Lys-59 is modified (N6,N6-dimethyllysine). Arg-81 is subject to Dimethylated arginine. Position 86 is a phosphoserine (Ser-86). Lys-87 is subject to N6-acetyllysine; alternate. Lys-87 carries the N6-lactoyllysine; alternate modification. Lys-87 is modified (N6,N6,N6-trimethyllysine; alternate). Omega-N-methylarginine occurs at positions 88 and 94. Lys-110 carries the N6-lactoyllysine; alternate modification. Lys-110 is subject to N6-methyllysine. At Thr-117 the chain carries Phosphothreonine. N6-lactoyllysine; alternate is present on residues Lys-118 and Lys-122. N6-succinyllysine; alternate is present on residues Lys-118 and Lys-122. Lys-118 carries the post-translational modification N6-methylated lysine; alternate. Lys-122 is covalently cross-linked (Glycyl lysine isopeptide (Lys-Gly) (interchain with G-Cter in ubiquitin); alternate).

This sequence belongs to the histone H2B family. As to quaternary structure, the nucleosome is a histone octamer containing two molecules each of H2A, H2B, H3 and H4 assembled in one H3-H4 heterotetramer and two H2A-H2B heterodimers. Monoubiquitination at Lys-36 (H2BK34Ub) by the MSL1/MSL2 dimer is required for histone H3 'Lys-4' (H3K4me) and 'Lys-79' (H3K79me) methylation and transcription activation at specific gene loci, such as HOXA9 and MEIS1 loci. Similarly, monoubiquitination at Lys-122 (H2BK120Ub) by the RNF20/40 complex gives a specific tag for epigenetic transcriptional activation and is also prerequisite for histone H3 'Lys-4' and 'Lys-79' methylation. It also functions cooperatively with the FACT dimer to stimulate elongation by RNA polymerase II. H2BK120Ub also acts as a regulator of mRNA splicing: deubiquitination by USP49 is required for efficient cotranscriptional splicing of a large set of exons. Post-translationally, crotonylation (Kcr) is specifically present in male germ cells and marks testis-specific genes in post-meiotic cells, including X-linked genes that escape sex chromosome inactivation in haploid cells. Crotonylation marks active promoters and enhancers and confers resistance to transcriptional repressors. It is also associated with post-meiotically activated genes on autosomes. In terms of processing, acetylated during spermatogenesis. Acetylated form is most abundant in spermatogonia compared to spermatocytes and round spermatids. Phosphorylated at Thr-117 in spermatogonia, spermatocytes and round spermatids. Post-translationally, methylated at Lys-118 in spermatogonia, spermatocytes and round spermatids. In terms of processing, lactylated in macrophages by EP300/P300 by using lactoyl-CoA directly derived from endogenous or exogenous lactate, leading to stimulates gene transcription. Mainly expressed in testis, and the corresponding protein is also present in mature sperm (at protein level). Also found in some fat cells.

The protein resides in the nucleus. It is found in the chromosome. Variant histone specifically required to direct the transformation of dissociating nucleosomes to protamine in male germ cells. Entirely replaces classical histone H2B prior nucleosome to protamine transition and probably acts as a nucleosome dissociating factor that creates a more dynamic chromatin, facilitating the large-scale exchange of histones. Core component of nucleosome. Nucleosomes wrap and compact DNA into chromatin, limiting DNA accessibility to the cellular machineries which require DNA as a template. Histones thereby play a central role in transcription regulation, DNA repair, DNA replication and chromosomal stability. DNA accessibility is regulated via a complex set of post-translational modifications of histones, also called histone code, and nucleosome remodeling. Also found in fat cells, its function and the presence of post-translational modifications specific to such cells are still unclear. This Homo sapiens (Human) protein is Histone H2B type 1-A.